The chain runs to 68 residues: Small proline-rich protein 2K (68 aa).

The stretch at Pro21–Pro26 is one 1; truncated repeat. The tract at residues Pro21 to Ser65 is 3.5 X 9 AA approximate tandem repeats. 3 consecutive repeat copies span residues Pro27–Pro35, Pro36–Pro44, and Gln45–Pro53.

It belongs to the cornifin (SPRR) family. As to expression, not expressed in uterus.

It localises to the cytoplasm. Its function is as follows. Cross-linked envelope protein of keratinocytes. It is a keratinocyte protein that first appears in the cell cytosol, but ultimately becomes cross-linked to membrane proteins by transglutaminase. All that results in the formation of an insoluble envelope beneath the plasma membrane. The sequence is that of Small proline-rich protein 2K (Sprr2k) from Mus musculus (Mouse).